Reading from the N-terminus, the 81-residue chain is Small ribosomal subunit protein bS20 (81 aa).

Belongs to the bacterial ribosomal protein bS20 family.

In terms of biological role, binds directly to 16S ribosomal RNA. This is Small ribosomal subunit protein bS20 from Mycoplasma mycoides subsp. mycoides SC (strain CCUG 32753 / NCTC 10114 / PG1).